Reading from the N-terminus, the 492-residue chain is MDFWLYKQAQQNGHHIAITDGQESYTYQNLYCEASLLAKRLKAYQQSRVGLYIDNSIQSIILIHACWLANIEIAMINTRLTPNEMTNQMRSIDVQLIFCTLPLELRGFQIVSLDDIEFAGRDITTNGLLDNTMGIQYDTSNETVVPKESPSNILNTSFNLDDIASIMFTSGTTGPQKAVPQTFRNHYASAIGCKESLGFDRDTNWLSVLPIYHISGLSVLLRAVIEGFTVRIVDKFNAEQILTMIKNERITHISLVPQTLNWLMQQGLHEPYNLQKILLGGAKLSATMIETALQYNLPIYNSFGMTETCSQFLTATPEMLHARPDTVGMPSANVDVKIKNPNKEGHGELMIKGANVMNGYLYPTDLTGTFENGYFNTGDIAEIDHEGYVMIYDRRKDLIISGGENIYPYQIETVAKQFPGISDAVCVGHPDDTWGQVPKLYFVSESDISKAQLIAYLSKHLAKYKVPKHFEKVDTLPYTSTGKLQRNKLYRG.

It belongs to the ATP-dependent AMP-binding enzyme family. MenE subfamily.

The enzyme catalyses 2-succinylbenzoate + ATP + CoA = 2-succinylbenzoyl-CoA + AMP + diphosphate. Its pathway is quinol/quinone metabolism; 1,4-dihydroxy-2-naphthoate biosynthesis; 1,4-dihydroxy-2-naphthoate from chorismate: step 5/7. It functions in the pathway quinol/quinone metabolism; menaquinone biosynthesis. Converts 2-succinylbenzoate (OSB) to 2-succinylbenzoyl-CoA (OSB-CoA). The chain is 2-succinylbenzoate--CoA ligase from Staphylococcus aureus (strain Mu3 / ATCC 700698).